The sequence spans 70 residues: ATP synthase subunit c (70 aa).

Transmembrane regions (helical) follow at residues 5 to 25 and 47 to 67; these read AAAI…GLIV and FIGV…AFMV.

The protein belongs to the ATPase C chain family. F-type ATPases have 2 components, F(1) - the catalytic core - and F(0) - the membrane proton channel. F(1) has five subunits: alpha(3), beta(3), gamma(1), delta(1), epsilon(1). F(0) has three main subunits: a(1), b(2) and c(10-14). The alpha and beta chains form an alternating ring which encloses part of the gamma chain. F(1) is attached to F(0) by a central stalk formed by the gamma and epsilon chains, while a peripheral stalk is formed by the delta and b chains.

It is found in the cell membrane. Functionally, f(1)F(0) ATP synthase produces ATP from ADP in the presence of a proton or sodium gradient. F-type ATPases consist of two structural domains, F(1) containing the extramembraneous catalytic core and F(0) containing the membrane proton channel, linked together by a central stalk and a peripheral stalk. During catalysis, ATP synthesis in the catalytic domain of F(1) is coupled via a rotary mechanism of the central stalk subunits to proton translocation. In terms of biological role, key component of the F(0) channel; it plays a direct role in translocation across the membrane. A homomeric c-ring of between 10-14 subunits forms the central stalk rotor element with the F(1) delta and epsilon subunits. The protein is ATP synthase subunit c of Anoxybacillus flavithermus (strain DSM 21510 / WK1).